We begin with the raw amino-acid sequence, 153 residues long: Ribosome maturation factor RimP (153 aa).

Belongs to the RimP family.

It is found in the cytoplasm. Functionally, required for maturation of 30S ribosomal subunits. The chain is Ribosome maturation factor RimP from Clostridium botulinum (strain Loch Maree / Type A3).